Reading from the N-terminus, the 212-residue chain is MNNSLIVRQLGLQDYQEIWHKMQDFTDTRNAETQDEIWLVQHYPVFTQGQAGKPEHLLQRSEIPVVQSDRGGQITYHAPGQQVMYVLIDIKRHKNLNVRQLVTALEQTVVKTLAEYGIESYPKPDAPGVYVDGKKICSLGLRIRRGCSFHGLALNINMDLNPFHYINPCGYAGLEMCQLADFVNQDEADWDNVSAKLIKHFADLLGYNITTL.

Residues 31 to 209 (AETQDEIWLV…HFADLLGYNI (179 aa)) form the BPL/LPL catalytic domain. Residues 70–77 (RGGQITYH), 138–140 (SLG), and 151–153 (GLA) contribute to the substrate site. Cysteine 169 (acyl-thioester intermediate) is an active-site residue.

Belongs to the LipB family.

Its subcellular location is the cytoplasm. The enzyme catalyses octanoyl-[ACP] + L-lysyl-[protein] = N(6)-octanoyl-L-lysyl-[protein] + holo-[ACP] + H(+). Its pathway is protein modification; protein lipoylation via endogenous pathway; protein N(6)-(lipoyl)lysine from octanoyl-[acyl-carrier-protein]: step 1/2. Catalyzes the transfer of endogenously produced octanoic acid from octanoyl-acyl-carrier-protein onto the lipoyl domains of lipoate-dependent enzymes. Lipoyl-ACP can also act as a substrate although octanoyl-ACP is likely to be the physiological substrate. This chain is Octanoyltransferase, found in Haemophilus influenzae (strain PittGG).